Consider the following 450-residue polypeptide: Tubulin alpha-1 chain (450 aa).

Positions 11, 71, 144, 145, 179, 206, and 228 each coordinate GTP. E71 is a Mg(2+) binding site. Residue E254 is part of the active site.

It belongs to the tubulin family. As to quaternary structure, dimer of alpha and beta chains. A typical microtubule is a hollow water-filled tube with an outer diameter of 25 nm and an inner diameter of 15 nM. Alpha-beta heterodimers associate head-to-tail to form protofilaments running lengthwise along the microtubule wall with the beta-tubulin subunit facing the microtubule plus end conferring a structural polarity. Microtubules usually have 13 protofilaments but different protofilament numbers can be found in some organisms and specialized cells. Mg(2+) serves as cofactor. Undergoes a tyrosination/detyrosination cycle, the cyclic removal and re-addition of a C-terminal tyrosine residue by the enzymes tubulin tyrosine carboxypeptidase (TTCP) and tubulin tyrosine ligase (TTL), respectively.

It is found in the cytoplasm. The protein localises to the cytoskeleton. The catalysed reaction is GTP + H2O = GDP + phosphate + H(+). Tubulin is the major constituent of microtubules, a cylinder consisting of laterally associated linear protofilaments composed of alpha- and beta-tubulin heterodimers. Microtubules grow by the addition of GTP-tubulin dimers to the microtubule end, where a stabilizing cap forms. Below the cap, tubulin dimers are in GDP-bound state, owing to GTPase activity of alpha-tubulin. The polypeptide is Tubulin alpha-1 chain (TUBA1) (Oryza sativa subsp. japonica (Rice)).